A 397-amino-acid chain; its full sequence is Natural killer cell receptor 2B4 (397 aa).

A signal peptide spans 1-19 (MLGQAVLFTTFLLLRAHQG). The Extracellular segment spans residues 20–226 (QDCPDSSEEV…SVPSNFRFLP (207 aa)). Cysteine 22 and cysteine 119 are joined by a disulfide. Ig-like domains follow at residues 22–129 (CPDS…LILD) and 131–215 (VETP…THGC). Asparagine 78, asparagine 145, asparagine 161, asparagine 178, asparagine 197, asparagine 206, and asparagine 210 each carry an N-linked (GlcNAc...) asparagine glycan. An intrachain disulfide couples cysteine 154 to cysteine 196. Residues 227–247 (FGVIIVILVTLFLGAIICFCV) form a helical membrane-spanning segment. Residues 248 to 397 (WTKKRKQLQF…RELENFDVYS (150 aa)) lie on the Cytoplasmic side of the membrane. The ITSM 1 motif lies at 264-269 (TIYEYV). The residue at position 266 (tyrosine 266) is a Phosphotyrosine. The span at 277–290 (DQQGCSRASGSPSA) shows a compositional bias: polar residues. Residues 277–300 (DQQGCSRASGSPSAVQEDGRGQRE) are disordered. 3 consecutive short sequence motifs (ITSM) follow at residues 323–328 (TMYSMI), 342–347 (TVYSVV), and 367–372 (TVYEEV). A Phosphotyrosine; by FYN modification is found at tyrosine 325. The residue at position 344 (tyrosine 344) is a Phosphotyrosine. A Phosphotyrosine; by FYN modification is found at tyrosine 369.

In terms of assembly, interacts with CD48. Interacts (via phosphorylated ITSM 1-4) with SH2D1A/SAP (via SH2 domain); SH2D1A probably mediates association with FYN. Interacts (via phosphorylated ITSM 3) with PTPN11/SHP-2, INPP5D/SHIP1, PTPN6/SHP-1 and CSK; binding of SH2D1A prevents association with PTPN11, PTPN6 and CSK. Interacts weakly (via phosphorylated ITSM 2) with PTPN11 and CSK. Interacts with SH2D1B and SH2D1B2. Interacts with MHC class I proteins; the interaction is proposed to prevent self-killing of NK cells. N-linked glycosylation is essential for the binding to its ligand CD48. Also O-glycosylated, in contrast, O-linked sialylation has a negative impact on ligand binding. Post-translationally, phosphorylated by FYN and CSK on tyrosine residues following activation. Coligation with inhibitory receptors such as KIR2DL1 inhibits phosphorylation upon contact of NK cells with sensitive target cells. In terms of tissue distribution, expressed in natural killer (NK) cells, T cells and dendritic cells.

The protein resides in the membrane. It is found in the cell membrane. It localises to the membrane raft. Heterophilic receptor of the signaling lymphocytic activation molecule (SLAM) family; its ligand is CD48. SLAM receptors triggered by homo- or heterotypic cell-cell interactions are modulating the activation and differentiation of a wide variety of immune cells and thus are involved in the regulation and interconnection of both innate and adaptive immune response. Activities are controlled by presence or absence of small cytoplasmic adapter proteins, SH2D1A/SAP and/or SH2D1B/EAT-2. Acts as activating natural killer (NK) cell receptor. Activating function implicates association with SH2D1A and FYN. Downstreaming signaling involves predominantly VAV1, and, to a lesser degree, INPP5D/SHIP1 and CBL. Signal attenuation in the absence of SH2D1A is proposed to be dependent on INPP5D and to a lesser extent PTPN6/SHP-1 and PTPN11/SHP-2. Stimulates NK cell cytotoxicity, production of IFN-gamma and granule exocytosis. Optimal expansion and activation of NK cells seems to be dependent on the engagement of CD244 with CD48 expressed on neighboring NK cells. Regulation of NK cell activity by adapters Sh2d1b and Sh2d1b2 is reported conflictingly. Acts as costimulator in NK activation by enhancing signals by other NK receptors such as NCR3 and NCR1. At early stages of NK cell differentiation may function as an inhibitory receptor possibly ensuring the self-tolerance of developing NK cells. Involved in the regulation of CD8(+) T-cell proliferation; expression on activated T-cells and binding to CD48 provides costimulatory-like function for neighboring T-cells. Inhibits inflammatory responses in dendritic cells (DCs). The polypeptide is Natural killer cell receptor 2B4 (Cd244) (Mus musculus (Mouse)).